Here is a 148-residue protein sequence, read N- to C-terminus: Lysozyme C (148 aa).

An N-terminal signal peptide occupies residues 1–18 (MKVLVILGLVLLSVMVQG). The 130-residue stretch at 19 to 148 (KVFERCELAR…VSQYVQGCGV (130 aa)) folds into the C-type lysozyme domain. 4 disulfide bridges follow: cysteine 24–cysteine 146, cysteine 48–cysteine 134, cysteine 83–cysteine 99, and cysteine 95–cysteine 113. Residues glutamate 53 and aspartate 71 contribute to the active site.

It belongs to the glycosyl hydrolase 22 family. In terms of assembly, monomer.

Its subcellular location is the secreted. The catalysed reaction is Hydrolysis of (1-&gt;4)-beta-linkages between N-acetylmuramic acid and N-acetyl-D-glucosamine residues in a peptidoglycan and between N-acetyl-D-glucosamine residues in chitodextrins.. In terms of biological role, lysozymes have primarily a bacteriolytic function; those in tissues and body fluids are associated with the monocyte-macrophage system and enhance the activity of immunoagents. The sequence is that of Lysozyme C (LYZ) from Saimiri sciureus (Common squirrel monkey).